The following is a 199-amino-acid chain: Recombination protein RecR (199 aa).

A C4-type zinc finger spans residues 57–72; the sequence is CRQCRVLTEEPVCGLC. The Toprim domain maps to 80–175; sequence SLLCVVEGPA…RTTRIAHGVP (96 aa).

The protein belongs to the RecR family.

In terms of biological role, may play a role in DNA repair. It seems to be involved in an RecBC-independent recombinational process of DNA repair. It may act with RecF and RecO. The sequence is that of Recombination protein RecR from Alkalilimnicola ehrlichii (strain ATCC BAA-1101 / DSM 17681 / MLHE-1).